We begin with the raw amino-acid sequence, 229 residues long: Ribulose-phosphate 3-epimerase (229 aa).

Ser12 serves as a coordination point for substrate. A divalent metal cation is bound by residues His37, Asp39, and His70. Catalysis depends on Asp39, which acts as the Proton acceptor. Substrate contacts are provided by residues His70, 146-149 (GFTG), 181-183 (DGG), and 203-204 (AS). Asp181 serves as a coordination point for a divalent metal cation. Asp181 (proton donor) is an active-site residue.

It belongs to the ribulose-phosphate 3-epimerase family. The cofactor is a divalent metal cation.

The catalysed reaction is D-ribulose 5-phosphate = D-xylulose 5-phosphate. Its pathway is carbohydrate degradation. Its function is as follows. Catalyzes the reversible epimerization of D-ribulose 5-phosphate to D-xylulose 5-phosphate. This Chlamydia pneumoniae (Chlamydophila pneumoniae) protein is Ribulose-phosphate 3-epimerase.